Consider the following 180-residue polypeptide: Bifunctional protein PyrR (180 aa).

The PRPP-binding signature appears at V101–T113.

The protein belongs to the purine/pyrimidine phosphoribosyltransferase family. PyrR subfamily. As to quaternary structure, homodimer and homohexamer; in equilibrium.

The catalysed reaction is UMP + diphosphate = 5-phospho-alpha-D-ribose 1-diphosphate + uracil. Regulates transcriptional attenuation of the pyrimidine nucleotide (pyr) operon by binding in a uridine-dependent manner to specific sites on pyr mRNA. This disrupts an antiterminator hairpin in the RNA and favors formation of a downstream transcription terminator, leading to a reduced expression of downstream genes. Functionally, also displays a weak uracil phosphoribosyltransferase activity which is not physiologically significant. The protein is Bifunctional protein PyrR of Bacillus cereus (strain ATCC 14579 / DSM 31 / CCUG 7414 / JCM 2152 / NBRC 15305 / NCIMB 9373 / NCTC 2599 / NRRL B-3711).